Consider the following 170-residue polypeptide: Shikimate kinase (170 aa).

Position 11-16 (11-16) interacts with ATP; sequence LSGKST. Ser15 is a binding site for Mg(2+). Positions 33, 57, and 79 each coordinate substrate. Arg119 contributes to the ATP binding site. Arg137 contributes to the substrate binding site.

The protein belongs to the shikimate kinase family. Monomer. The cofactor is Mg(2+).

It localises to the cytoplasm. It carries out the reaction shikimate + ATP = 3-phosphoshikimate + ADP + H(+). It functions in the pathway metabolic intermediate biosynthesis; chorismate biosynthesis; chorismate from D-erythrose 4-phosphate and phosphoenolpyruvate: step 5/7. Catalyzes the specific phosphorylation of the 3-hydroxyl group of shikimic acid using ATP as a cosubstrate. The sequence is that of Shikimate kinase from Clostridium botulinum (strain 657 / Type Ba4).